A 688-amino-acid chain; its full sequence is PR domain zinc finger protein 8 (688 aa).

The 116-residue stretch at 16 to 131 (KAVQQCLTDI…KDEELLVWYG (116 aa)) folds into the SET domain. Position 130 (Tyr130) interacts with S-adenosyl-L-methionine. Residues 154–182 (YTCLECSQRFQFEFPYVAHLRFRCPKRLH) form a C2H2-type 1 zinc finger. Disordered stretches follow at residues 184 to 309 (TDAN…GCKG) and 397 to 506 (EEAA…PARS). Over residues 192 to 208 (QGGGLGTKDHGGGGGGK) the composition is skewed to gly residues. Low complexity-rich tracts occupy residues 209–219 (EQQQQQQQQQQ) and 275–284 (GSSSCVAAPG). Composition is skewed to gly residues over residues 414 to 424 (AGGGVAGGGSN) and 470 to 489 (LGGGGGAGTAGTAGGSGGGQ). 2 consecutive C2H2-type zinc fingers follow at residues 624-647 (NWCAKCNASFRMTSDLVYHMRSHH) and 665-687 (LKCPICNESFRERHHLSRHMTSH).

The protein belongs to the class V-like SAM-binding methyltransferase superfamily. Interacts with BHLHE22. Interacts with EPM2A and NHLRC1. This interaction sequesters EPM2A and NHLRC1 to the nucleus. In terms of tissue distribution, expressed in brain, heart, liver, testes, retina. Highest expression is observed in the retina and hippocampus; moderately expressed in the cortex and cerebellum. In the retina, it is expressed in bipolar and amacrine cells.

It is found in the nucleus. Probable histone methyltransferase, preferentially acting on 'Lys-9' of histone H3. Histone methyltransferase activity has not been confirmed in other species. Involved in the control of steroidogenesis through transcriptional repression of steroidogenesis marker genes such as CYP17A1 and LHCGR. Forms with BHLHE22 a transcriptional repressor complex controlling genes involved in neural development and neuronal differentiation. In the retina, it is required for rod bipolar and type 2 OFF-cone bipolar cell survival. This Mus musculus (Mouse) protein is PR domain zinc finger protein 8 (Prdm8).